A 154-amino-acid chain; its full sequence is 6,7-dimethyl-8-ribityllumazine synthase (154 aa).

5-amino-6-(D-ribitylamino)uracil contacts are provided by residues phenylalanine 22, 56–58 (AFE), and 80–82 (AVI). Residue 85 to 86 (ST) coordinates (2S)-2-hydroxy-3-oxobutyl phosphate. Histidine 88 serves as the catalytic Proton donor. 5-amino-6-(D-ribitylamino)uracil is bound at residue phenylalanine 113. A (2S)-2-hydroxy-3-oxobutyl phosphate-binding site is contributed by arginine 127.

The protein belongs to the DMRL synthase family.

It carries out the reaction (2S)-2-hydroxy-3-oxobutyl phosphate + 5-amino-6-(D-ribitylamino)uracil = 6,7-dimethyl-8-(1-D-ribityl)lumazine + phosphate + 2 H2O + H(+). The protein operates within cofactor biosynthesis; riboflavin biosynthesis; riboflavin from 2-hydroxy-3-oxobutyl phosphate and 5-amino-6-(D-ribitylamino)uracil: step 1/2. Its function is as follows. Catalyzes the formation of 6,7-dimethyl-8-ribityllumazine by condensation of 5-amino-6-(D-ribitylamino)uracil with 3,4-dihydroxy-2-butanone 4-phosphate. This is the penultimate step in the biosynthesis of riboflavin. The sequence is that of 6,7-dimethyl-8-ribityllumazine synthase from Clostridium kluyveri (strain NBRC 12016).